The chain runs to 107 residues: MTYLFLICAILAEVVATSLLKSTQGFTRLWPTVICLLGYAVSFALLAVSISRGMQTDVAYALWSAIGTALIVLIAVLFLGSPISVTKVVGVGLIIAGVVTLNLTGAH.

Transmembrane regions (helical) follow at residues 2-19 (TYLF…ATSL), 29-51 (LWPT…VSIS), 58-80 (VAYA…LFLG), and 84-106 (SVTK…LTGA).

It belongs to the drug/metabolite transporter (DMT) superfamily. Small multidrug resistance (SMR) (TC 2.A.7.1) family. Mmr subfamily.

It localises to the cell membrane. Functionally, multidrug efflux pump. Confers resistance to tetraphenylphosphonium (TPP), erythromycin, ethidium bromide, acriflavine, safranin O and pyronin Y. This is Multidrug resistance protein mmr (mmr) from Mycolicibacterium paratuberculosis (strain ATCC BAA-968 / K-10) (Mycobacterium paratuberculosis).